We begin with the raw amino-acid sequence, 220 residues long: N-(5'-phosphoribosyl)anthranilate isomerase (220 aa).

The protein belongs to the TrpF family.

The enzyme catalyses N-(5-phospho-beta-D-ribosyl)anthranilate = 1-(2-carboxyphenylamino)-1-deoxy-D-ribulose 5-phosphate. It functions in the pathway amino-acid biosynthesis; L-tryptophan biosynthesis; L-tryptophan from chorismate: step 3/5. The protein is N-(5'-phosphoribosyl)anthranilate isomerase of Gloeothece citriformis (strain PCC 7424) (Cyanothece sp. (strain PCC 7424)).